The primary structure comprises 110 residues: Translation initiation factor 1A 3 (110 aa).

Residues 1–29 form a disordered region; sequence MIRKRQSGSNKSVSSGNNQEVTRVRTPRK. Over residues 7–18 the composition is skewed to low complexity; that stretch reads SGSNKSVSSGNN. The S1-like domain occupies 22 to 96; the sequence is TRVRTPRKDR…SKADVIWKYT (75 aa).

This sequence belongs to the eIF-1A family.

Its function is as follows. Seems to be required for maximal rate of protein biosynthesis. Enhances ribosome dissociation into subunits and stabilizes the binding of the initiator Met-tRNA(I) to 40 S ribosomal subunits. In Methanosarcina acetivorans (strain ATCC 35395 / DSM 2834 / JCM 12185 / C2A), this protein is Translation initiation factor 1A 3 (eIF1A3).